Consider the following 354-residue polypeptide: Methionine import ATP-binding protein MetN 2 (354 aa).

One can recognise an ABC transporter domain in the interval 6–250 (IELKNISVHF…PQKPLTKEFI (245 aa)). 42-49 (GYSGAGKS) is a binding site for ATP.

Belongs to the ABC transporter superfamily. Methionine importer (TC 3.A.1.24) family. The complex is composed of two ATP-binding proteins (MetN), two transmembrane proteins (MetI) and a solute-binding protein (MetQ).

Its subcellular location is the cell membrane. The enzyme catalyses L-methionine(out) + ATP + H2O = L-methionine(in) + ADP + phosphate + H(+). It catalyses the reaction D-methionine(out) + ATP + H2O = D-methionine(in) + ADP + phosphate + H(+). Its function is as follows. Part of the ABC transporter complex MetNIQ involved in methionine import. Responsible for energy coupling to the transport system. This is Methionine import ATP-binding protein MetN 2 from Oenococcus oeni (strain ATCC BAA-331 / PSU-1).